We begin with the raw amino-acid sequence, 619 residues long: MELTQKERELSRWAAEEMEVPLAARPRESTLRRLCLSQGADIWAYIVQHVRSQRNIKKIQGNLLWHAYQDNPKIHRKLELEATVARLRAENQELDQSLELMDQESEAQDVAMTQTLQSLKDTQHRALLLQAQAGAVRRQQRGLQDPMQRLQNQLKHLQDMQRKAKVDVTFGPVVSAAPALEPEVLGDVRAACTLRTQFLQNLLTPRARGGSILSPCDDHVGTSYQQWLTSVETLLTNHPAGHVLAALEYLAAERESEIRSLCYGDGLKEEELSRPQAPESSNSSQVLPSTVHLIQEGWQAVGALVTQRSALLSERQVLTGRLQRLVEEVKRLLLGSSERKVLLLGLRHSGLLAELKALHAQSQELESAVGQRHLLLRELQAKRQRILQWRQLVEDRQEQIRLLIKGNSASKTRLSRGPEEVLALIDQKLVPTSEAVAPQSQELLRCLKEEAKHLPRVLLGPLLPYHVKGLKPLSRILPSIHQLHPTNPRASSLILLSHTLGLPVGKASELLLPRAASLQQDLLFLQDQLGLRRGNLCVKTSLPPGPSTQELLQMQVSQEKEQNENVGQTLKKLSNLLKQALEQIPELQGIVQDWWEQPSQAALPEEICQGLSLPQCQLR.

N-acetylmethionine is present on M1. 3 coiled-coil regions span residues 73 to 108 (KIHRKLELEATVARLRAENQELDQSLELMDQESEAQ), 310 to 395 (ALLS…LVED), and 550 to 590 (ELLQ…LQGI).

This sequence belongs to the HAUS5 family. Component of the HAUS augmin-like complex. The complex interacts with the gamma-tubulin ring complex and this interaction is required for spindle assembly. Interacts with EML3 (phosphorylated at 'Thr-882').

It localises to the cytoplasm. The protein localises to the cytoskeleton. It is found in the microtubule organizing center. The protein resides in the centrosome. Its subcellular location is the spindle. Functionally, contributes to mitotic spindle assembly, maintenance of centrosome integrity and completion of cytokinesis as part of the HAUS augmin-like complex. The chain is HAUS augmin-like complex subunit 5 (Haus5) from Mus musculus (Mouse).